The primary structure comprises 197 residues: Small ribosomal subunit protein uS11m (197 aa).

The span at 43–52 shows a compositional bias: basic and acidic residues; the sequence is AAKEEVEKAE. The tract at residues 43–66 is disordered; that stretch reads AAKEEVEKAETPAPAPSRSSFSIY.

The protein belongs to the universal ribosomal protein uS11 family. Component of the mitochondrial ribosome small subunit (28S) which comprises a 12S rRNA and about 30 distinct proteins.

The protein resides in the mitochondrion. The chain is Small ribosomal subunit protein uS11m (MRPS11) from Bos taurus (Bovine).